A 314-amino-acid chain; its full sequence is tRNA dimethylallyltransferase (314 aa).

12–19 (GPTAAGKS) provides a ligand contact to ATP. 14–19 (TAAGKS) serves as a coordination point for substrate. Interaction with substrate tRNA stretches follow at residues 37-40 (DSAT), 161-165 (QRIQR), and 245-250 (RCVGYR).

It belongs to the IPP transferase family. As to quaternary structure, monomer. Mg(2+) is required as a cofactor.

It catalyses the reaction adenosine(37) in tRNA + dimethylallyl diphosphate = N(6)-dimethylallyladenosine(37) in tRNA + diphosphate. Catalyzes the transfer of a dimethylallyl group onto the adenine at position 37 in tRNAs that read codons beginning with uridine, leading to the formation of N6-(dimethylallyl)adenosine (i(6)A). This Bordetella petrii (strain ATCC BAA-461 / DSM 12804 / CCUG 43448) protein is tRNA dimethylallyltransferase.